A 117-amino-acid chain; its full sequence is Large ribosomal subunit protein bL20 (117 aa).

The protein belongs to the bacterial ribosomal protein bL20 family.

Binds directly to 23S ribosomal RNA and is necessary for the in vitro assembly process of the 50S ribosomal subunit. It is not involved in the protein synthesizing functions of that subunit. This Streptococcus suis (strain 05ZYH33) protein is Large ribosomal subunit protein bL20.